A 306-amino-acid chain; its full sequence is Probable GTP 3',8-cyclase (306 aa).

Residues 5-232 form the Radical SAM core domain; sequence RFGRPVTNLR…RRRKYFLPVD (228 aa). Residue Arg-14 coordinates GTP. Residues Cys-21 and Cys-25 each coordinate [4Fe-4S] cluster. Residue Tyr-27 participates in S-adenosyl-L-methionine binding. Cys-28 is a binding site for [4Fe-4S] cluster. Residue Lys-61 coordinates GTP. Residue Gly-65 participates in S-adenosyl-L-methionine binding. Thr-90 lines the GTP pocket. Ser-114 lines the S-adenosyl-L-methionine pocket. Residue Lys-150 participates in GTP binding. Met-189 serves as a coordination point for S-adenosyl-L-methionine. Cys-250 and Cys-253 together coordinate [4Fe-4S] cluster. 255–257 lines the GTP pocket; it reads RLR. [4Fe-4S] cluster is bound at residue Cys-267.

It belongs to the radical SAM superfamily. MoaA family. The cofactor is [4Fe-4S] cluster.

It catalyses the reaction GTP + AH2 + S-adenosyl-L-methionine = (8S)-3',8-cyclo-7,8-dihydroguanosine 5'-triphosphate + 5'-deoxyadenosine + L-methionine + A + H(+). It participates in cofactor biosynthesis; molybdopterin biosynthesis. Functionally, catalyzes the cyclization of GTP to (8S)-3',8-cyclo-7,8-dihydroguanosine 5'-triphosphate. This is Probable GTP 3',8-cyclase from Pyrococcus abyssi (strain GE5 / Orsay).